The chain runs to 342 residues: Apurinic-apyrimidinic endonuclease 1 (342 aa).

The Zn(2+) site is built by His61, Glu136, Asp170, His173, His207, Asp220, His222, and Glu252. Residues 299–310 (HLNKFEKKEAKK) show a composition bias toward basic and acidic residues. The interval 299–342 (HLNKFEKKEAKKDRKKKSKDGDQTTLLLRKKQKLGNAEVKSLDE) is disordered.

It belongs to the AP endonuclease 2 family. Requires Zn(2+) as cofactor.

Its subcellular location is the nucleus. DNA repair enzyme that cleaves apurinic/apyrimidinic (AP) sites and removes 3'-blocking groups present at single strand breaks of damaged DNA. Provides back-up AP endonuclease (APE) activity to apn2 together with uve1. In Schizosaccharomyces pombe (strain 972 / ATCC 24843) (Fission yeast), this protein is Apurinic-apyrimidinic endonuclease 1 (apn1).